The primary structure comprises 296 residues: Acetylglutamate kinase (296 aa).

Residues 65 to 66, R87, and N190 contribute to the substrate site; that span reads GG.

This sequence belongs to the acetylglutamate kinase family. ArgB subfamily.

Its subcellular location is the cytoplasm. It catalyses the reaction N-acetyl-L-glutamate + ATP = N-acetyl-L-glutamyl 5-phosphate + ADP. It functions in the pathway amino-acid biosynthesis; L-arginine biosynthesis; N(2)-acetyl-L-ornithine from L-glutamate: step 2/4. Functionally, catalyzes the ATP-dependent phosphorylation of N-acetyl-L-glutamate. The polypeptide is Acetylglutamate kinase (Moorella thermoacetica (strain ATCC 39073 / JCM 9320)).